The chain runs to 222 residues: Glutathione S-transferase A2 (222 aa).

The residue at position 2 (Ala2) is an N-acetylalanine. Residues 3–83 (EKPKLHYSNI…YIASKYNLYG (81 aa)) enclose the GST N-terminal domain. N6-succinyllysine is present on Lys4. Glutathione is bound by residues Tyr9, Arg45, 54–55 (QV), and 67–68 (QT). Residues 85–207 (DIKEKALIDM…LQPGSPRKPP (123 aa)) form the GST C-terminal domain. Residues 199-222 (QPGSPRKPPMDEKSLEESRKIFRF) are disordered. A compositionally biased stretch (basic and acidic residues) spans 206 to 222 (PPMDEKSLEESRKIFRF).

Belongs to the GST superfamily. Alpha family. As to quaternary structure, homodimer or heterodimer of GSTA1 and GSTA2. Liver.

The protein resides in the cytoplasm. The enzyme catalyses RX + glutathione = an S-substituted glutathione + a halide anion + H(+). Functionally, catalyzes the conjugation of glutathione to a large variety of electrophilic compounds. The chain is Glutathione S-transferase A2 (GSTA2) from Homo sapiens (Human).